A 450-amino-acid polypeptide reads, in one-letter code: tRNA modification GTPase MnmE (450 aa).

Residues Arg20, Glu78, and Lys117 each coordinate (6S)-5-formyl-5,6,7,8-tetrahydrofolate. The TrmE-type G domain maps to 211-372 (GLRMVIVGKP…LEESIYRETQ (162 aa)). Asn221 serves as a coordination point for K(+). Residues 221–226 (NVGKST), 240–246 (TDIPGTT), and 265–268 (DTAG) each bind GTP. Ser225 serves as a coordination point for Mg(2+). The K(+) site is built by Thr240, Ile242, and Thr245. Thr246 contributes to the Mg(2+) binding site. A (6S)-5-formyl-5,6,7,8-tetrahydrofolate-binding site is contributed by Lys450.

Belongs to the TRAFAC class TrmE-Era-EngA-EngB-Septin-like GTPase superfamily. TrmE GTPase family. Homodimer. Heterotetramer of two MnmE and two MnmG subunits. K(+) serves as cofactor.

The protein resides in the cytoplasm. Functionally, exhibits a very high intrinsic GTPase hydrolysis rate. Involved in the addition of a carboxymethylaminomethyl (cmnm) group at the wobble position (U34) of certain tRNAs, forming tRNA-cmnm(5)s(2)U34. The chain is tRNA modification GTPase MnmE from Thermotoga sp. (strain RQ2).